The primary structure comprises 57 residues: MMEKMKDVNWQEEIRKIIIERVRREAKKRLLEETRKLRMEMKSSKIAEMIREDRDAR.

Residues 9–45 (NWQEEIRKIIIERVRREAKKRLLEETRKLRMEMKSSK) adopt a coiled-coil conformation.

This is an uncharacterized protein from Archaeoglobus fulgidus (strain ATCC 49558 / DSM 4304 / JCM 9628 / NBRC 100126 / VC-16).